The sequence spans 211 residues: Metalloproteinase inhibitor 3 (211 aa).

A signal peptide spans 1–23 (MTPWLGLVVLLGSWSLGDWGAEA). Cys-24 provides a ligand contact to Zn(2+). 2 involved in metalloproteinase-binding regions span residues 24-27 (CTCS) and 88-89 (ES). 6 disulfides stabilise this stretch: Cys-24-Cys-91, Cys-26-Cys-118, Cys-36-Cys-143, Cys-145-Cys-192, Cys-150-Cys-155, and Cys-163-Cys-184. Residues 24-143 (CTCSPSHPQD…GLNYRYHLGC (120 aa)) enclose the NTR domain. Residues 105 to 188 (TGRVYDGKMY…SKHYACIRQK (84 aa)) form a mediates interaction with EFEMP1 region. N-linked (GlcNAc...) asparagine glycosylation occurs at Asn-207.

Belongs to the protease inhibitor I35 (TIMP) family. As to quaternary structure, interacts with EFEMP1. Interacts with KDR.

Its subcellular location is the secreted. It is found in the extracellular space. The protein resides in the extracellular matrix. Mediates a variety of processes including matrix regulation and turnover, inflammation, and angiogenesis, through reversible inhibition of zinc protease superfamily enzymes, primarily matrix metalloproteinases (MMPs). Regulates extracellular matrix (ECM) remodeling through inhibition of matrix metalloproteinases (MMP) including MMP-1, MMP-2, MMP-3, MMP-7, MMP-9, MMP-13, MMP-14 and MMP-15. Additionally, modulates the processing of amyloid precursor protein (APP) and apolipoprotein E receptor ApoER2 by inhibiting two alpha-secretases ADAM10 and ADAM17. Functions as a tumor suppressor and a potent inhibitor of angiogenesis. Exerts its anti-angiogenic effect by directly interacting with vascular endothelial growth factor (VEGF) receptor-2/KDR, preventing its binding to the VEGFA ligand. Selectively induces apoptosis in angiogenic endothelial cells through a caspase-independent cell death pathway. Mechanistically, inhibits matrix-induced focal adhesion kinase PTK2 tyrosine phosphorylation and association with paxillin/PXN and disrupts the incorporation of ITGB3, PTK2 and PXN into focal adhesion contacts on the matrix. The protein is Metalloproteinase inhibitor 3 (TIMP3) of Bos taurus (Bovine).